The following is a 343-amino-acid chain: DNA polymerase III subunit delta (343 aa).

3 domain regions span residues 1-140 (MIRL…VTCQ), 141-210 (TPEQ…NDAA), and 211-343 (HFTP…FIDG).

The protein belongs to the DNA polymerase HolA subunit family. In terms of assembly, the DNA polymerase III holoenzyme complex contains at least 10 different subunits organized into 3 functionally essential subassemblies: the Pol III core, the beta sliding clamp processivity factor and the clamp-loading complex. The Pol III core (subunits alpha, epsilon and theta) contains the polymerase and the 3'-5' exonuclease proofreading activities. The polymerase is tethered to the template via the dimeric beta sliding clamp processivity factor. The clamp-loading complex (also called gamma complex) assembles the beta sliding clamp onto the primed template and plays a central role in the organization and communication at the replication fork. The clamp-loading complex contains delta, delta', psi and chi, and 3 copies of either or both of two different DnaX proteins, gamma and tau. The DNA replisome complex has a single clamp loader (3 tau and 1 each of delta, delta', psi and chi subunits) which binds 3 Pol III cores (1 core on the leading strand and 2 on the lagging strand) each with a beta sliding clamp dimer. Additional proteins in the replisome are other copies of gamma, psi and chi, Ssb, DNA helicase and RNA primase. The clamp loader hydrolyzes ATP to assemble the beta processivity factor onto the primed template and plays a central role in the organization and communication at the replication fork; the minimal complex to load the beta sliding clamp on DNA is delta, delta', gamma.

The enzyme catalyses DNA(n) + a 2'-deoxyribonucleoside 5'-triphosphate = DNA(n+1) + diphosphate. Its function is as follows. Part of the beta sliding clamp loading complex, which hydrolyzes ATP to load the beta clamp onto primed DNA to form the DNA replication pre-initiation complex. DNA polymerase III is a complex, multichain enzyme responsible for most of the replicative synthesis in bacteria. This DNA polymerase also exhibits 3'-5' exonuclease activity. The delta subunit is the wrench that will open the beta subunit dimer, which has been modeled to leave a gap large enough for ssDNA to pass through. The gamma complex (gamma(3),delta,delta') is thought to load beta dimers onto DNA by binding ATP which alters the complex's conformation so it can bind beta sliding clamp dimers and open them at one interface. Primed DNA is recognized, ATP is hydrolyzed releasing the gamma complex and closing the beta sliding clamp ring around the primed DNA. This is DNA polymerase III subunit delta (holA) from Escherichia coli (strain K12).